Consider the following 2515-residue polypeptide: Polyprotein P1234 (2515 aa).

The Alphavirus-like MT domain maps to 30-260 (VAQQATPNDH…EHRASLQSWH (231 aa)). Residues 245 to 264 (GSTLYPEHRASLQSWHLPSV) are nsP1 membrane-binding. A lipid anchor (S-palmitoyl cysteine; by host) is attached at Cys420. The region spanning 695–850 (ELTNPPYHEL…RDICTKTFYK (156 aa)) is the (+)RNA virus helicase ATP-binding domain. Position 726 to 733 (726 to 733 (GTPGSGKS)) interacts with a ribonucleoside 5'-triphosphate. A (+)RNA virus helicase C-terminal domain is found at 851–999 (FISRRCTQPV…IEDWEAEHKG (149 aa)). In terms of domain architecture, Peptidase C9 spans 1012–1341 (NPFSCKTNVC…CVISSVYEGT (330 aa)). Residues 1013 to 1032 (PFSCKTNVCWAKALEPILAT) form a nucleolus localization signal region. The active-site For cysteine protease nsP2 activity is the Cys1021. Positions 1066-1075 (IKFFGMDLTS) match the Nuclear export signal motif. His1098 serves as the catalytic For cysteine protease nsP2 activity. Residues 1196–1200 (PHKRI) carry the Nuclear localization signal motif. One can recognise a Macro domain in the interval 1348 to 1507 (APSYRTKREN…RIDAVLQLKE (160 aa)). Residues Asn1371, Gly1379, Gly1459, Ile1460, and Tyr1461 each coordinate ADP-D-ribose. Zn(2+) is bound by residues Cys1610, Cys1612, Cys1635, and Cys1653. Disordered regions lie at residues 1678–1705 (QPAAPPAQDEEAPEAVATPAPPAADNTS) and 1777–1797 (LAAASKTQEEPIPPASTSSAD). Short sequence motifs (FGDF; binding to host G3BP1) lie at residues 1839–1842 (FGSF) and 1862–1865 (FGSF). The RdRp catalytic domain occupies 2269–2384 (DPVLETDIAS…HGVVSDKEMA (116 aa)).

As to quaternary structure, interacts with non-structural protein 3. Interacts with RNA-directed RNA polymerase nsP4. Interacts with protease nsP2. interacts with itself. In terms of assembly, interacts with mRNA-capping enzyme nsP1. Interacts with host DDX1. Interacts with host DDX3. Interacts (via C-terminus) with host G3BP1; this interaction inhibits the formation of host stress granules on viral mRNAs and the nsp3-G3BP1 complexes bind viral RNAs and probably orchestrate the assembly of viral replication complexes. Interacts (via C-terminus) with host G3BP2; this interaction inhibits the formation of host stress granules on viral mRNAs and the nsp3-G3BP2 complexes bind viral RNAs and probably orchestrate the assembly of viral replication complexes. Interacts with mRNA-capping enzyme nsP1. Interacts with protease nsP2. interacts with itself. As to quaternary structure, interacts with RNA-directed RNA polymerase nsP4. Interacts with mRNA-capping enzyme nsP1. Interacts with KPNA1/karyopherin-alpha1; this interaction probably allows the active transport of protease nsP2 into the host nucleus. Requires Mg(2+) as cofactor. It depends on Mn(2+) as a cofactor. In terms of processing, specific enzymatic cleavages in vivo yield mature proteins. The processing of the polyprotein is temporally regulated. In early stages (1.7 hpi), P1234 is first cleaved in trans through its nsP2 protease activity, releasing P123' and nsP4, which associate to form the early replication complex. At the same time, P1234 is also cut at the nsP1/nsP2 site early in infection but with lower efficiency. After replication of the viral minus-strand RNAs (4 hpi), the polyproteins are cut at the nsP1/nsP2 and nsP2/nsP3 sites very efficiently, preventing accumulation of P123' and P1234 and allowing the formation of the late replication complex. NsP3'/nsP4 site is not cleaved anymore and P34 is produced rather than nsP4. Post-translationally, specific enzymatic cleavages in vivo yield mature proteins. The processing of the polyprotein is temporally regulated. In early stages (1.7 hpi), P123 is cleaved at the nsP1/nsP2 site with low efficiency. After replication of the viral minus-strand RNAs (4 hpi), the polyproteins are cut at the nsP1/nsP2 and nsP2/nsP3 sites very efficiently, preventing accumulation of P123 and allowing the formation of the late replication complex. Specific enzymatic cleavages in vivo yield mature proteins. The processing of the polyprotein is temporally regulated. In early stages (1.7 hpi), P123' is cleaved at the nsP1/nsP2 site with low efficiency. After replication of the viral minus-strand RNAs (4 hpi), the polyproteins are cut at the nsP1/nsP2 and nsP2/nsP3 sites very efficiently, preventing accumulation of P123' and allowing the formation of the late replication complex. In terms of processing, palmitoylated by host palmitoyltransferases ZDHHC2 and ZDHHC19. Post-translationally, phosphorylated by host on serines and threonines. Ubiquitinated; targets the protein for rapid degradation via the ubiquitin system. Nsp4 is present in extremely low quantities due to low frequency of translation through the amber stop-codon and the degradation by the ubiquitin pathway.

It localises to the host cytoplasmic vesicle membrane. Its subcellular location is the host cell membrane. The protein localises to the host cell projection. It is found in the host filopodium. The protein resides in the host nucleus. It localises to the host cytoplasm. The enzyme catalyses GTP + S-adenosyl-L-methionine = N(7)-methyl-GTP + S-adenosyl-L-homocysteine. It catalyses the reaction N(7)-methyl-GTP + L-histidyl-[protein] = N(tele)-(N(7)-methylguanosine 5'-phospho)-L-histidyl-[protein] + diphosphate. It carries out the reaction N(tele)-(N(7)-methylguanosine 5'-phospho)-L-histidyl-[protein] + a 5'-end diphospho-(purine-ribonucleoside) in mRNA + H(+) = a 5'-end (N(7)-methyl 5'-triphosphoguanosine)-(purine-ribonucleoside) in mRNA + L-histidyl-[protein]. The catalysed reaction is a 5'-end triphospho-ribonucleoside in mRNA + H2O = a 5'-end diphospho-ribonucleoside in mRNA + phosphate + H(+). The enzyme catalyses a ribonucleoside 5'-triphosphate + H2O = a ribonucleoside 5'-diphosphate + phosphate + H(+). It catalyses the reaction ATP + H2O = ADP + phosphate + H(+). It carries out the reaction RNA(n) + a ribonucleoside 5'-triphosphate = RNA(n+1) + diphosphate. The catalysed reaction is RNA(n) + ATP = RNA(n)-3'-adenine ribonucleotide + diphosphate. The enzyme catalyses 4-O-(ADP-D-ribosyl)-L-aspartyl-[protein] + H2O = L-aspartyl-[protein] + ADP-D-ribose + H(+). It catalyses the reaction 5-O-(ADP-D-ribosyl)-L-glutamyl-[protein] + H2O = L-glutamyl-[protein] + ADP-D-ribose + H(+). It carries out the reaction ADP-alpha-D-ribose 1''-phosphate + H2O = ADP-D-ribose + phosphate. In terms of biological role, inactive precursor of the viral replicase, which is activated by cleavages carried out by the viral protease nsP2. Its function is as follows. The early replication complex formed by the polyprotein P123 and nsP4 synthesizes minus-strand RNAs. As soon P123 is cleaved into mature proteins, the plus-strand RNAs synthesis begins. The early replication complex formed by the polyprotein P123' and nsP4 synthesizes minus-strand RNAs. Polyprotein P123' is a short-lived polyprotein that accumulates during early stage of infection. As soon P123' is cleaved into mature proteins, the plus-strand RNAs synthesis begins. Functionally, cytoplasmic capping enzyme that catalyzes two virus-specific reactions: methyltransferase and nsP1 guanylyltransferase. mRNA-capping is necessary since all viral RNAs are synthesized in the cytoplasm, and host capping enzymes are restricted to the nucleus. The enzymatic reaction involves a covalent link between 7-methyl-GMP and nsP1, whereas eukaryotic capping enzymes form a covalent complex only with GMP. nsP1 capping consists in the following reactions: GTP is first methylated into 7-methyl-GMP and then is covalently linked to nsP1 to form the m7GMp-nsP1 complex from which 7-methyl-GMP complex is transferred to the mRNA to create the cap structure. NsP1 is needed for the initiation of the minus-strand RNAs synthesis. Probably serves as a membrane anchor for the replication complex composed of nsP1-nsP4. Palmitoylated nsP1 is remodeling host cell cytoskeleton, and induces filopodium-like structure formation at the surface of the host cell. Interacts with host TMEM45B; this interaction leads to viral replication inhibition. In terms of biological role, multifunctional protein whose N-terminus is part of the RNA polymerase complex and displays NTPase, RNA triphosphatase and helicase activities. NTPase and RNA triphosphatase are involved in viral RNA capping and helicase keeps a check on the dsRNA replication intermediates. The C-terminus harbors a protease that specifically cleaves the polyproteins and releases the mature proteins. Required for the shutoff of minus-strand RNAs synthesis. Specifically inhibits the host IFN response by promoting the nuclear export of host STAT1. Also inhibits host transcription by inducing rapid proteasome-dependent degradation of POLR2A, a catalytic subunit of the RNAPII complex. The resulting inhibition of cellular protein synthesis serves to ensure maximal viral gene expression and to evade host immune response. Its function is as follows. Seems to be essential for minus-strand RNAs and subgenomic 26S mRNAs synthesis. Displays mono-ADP-ribosylhydrolase activity. ADP-ribosylation is a post-translational modification that controls various processes of the host cell and the virus probably needs to revert it for optimal viral replication. Binds proteins of FXR family and sequesters them into the viral RNA replication complexes thereby inhibiting the formation of host stress granules on viral mRNAs. The nsp3'-FXR complexes bind viral RNAs and probably orchestrate the assembly of viral replication complexes, thanks to the ability of FXR family members to self-assemble and bind DNA. Seems to be essential for minus-strand RNAs and subgenomic 26S mRNAs synthesis. Displays mono-ADP-ribosylhydrolase activity. ADP-ribosylation is a post-translantional modification that controls various processes of the host cell and the virus probably needs to revert it for optimal viral replication. Binds proteins of G3BP family and sequesters them into the viral RNA replication complexes thereby inhibiting the formation of host stress granules on viral mRNAs. The nsp3-G3BP complexes bind viral RNAs and probably orchestrate the assembly of viral replication complexes, thanks to the ability of G3BP family members to self-assemble and bind DNA. Functionally, RNA dependent RNA polymerase. Replicates genomic and antigenomic RNA by recognizing replications specific signals. The early replication complex formed by the polyprotein P123 and nsP4 synthesizes minus-strand RNAs. The late replication complex composed of fully processed nsP1-nsP4 is responsible for the production of genomic and subgenomic plus-strand RNAs. The core catalytic domain of nsP4 also possesses terminal adenylyltransferase (TATase) activity that is probably involved in maintenance and repair of the poly(A) tail, an element required for replication of the viral genome. Interacts with host TMEM45B; this interaction leads to viral replication inhibition. The protein is Polyprotein P1234 of Acrocephalus scirpaceus (Eurasian reed-warbler).